The following is a 279-amino-acid chain: Large ribosomal subunit protein uL2 (279 aa).

The interval 223-279 is disordered; that stretch reads MAMNPVDHPMGGGEGKSKSGGGRKHPKSPWGQLAKGLKTRNKKKASTKLIVRGRKAK. The segment covering 232–242 has biased composition (gly residues); it reads MGGGEGKSKSG. The segment covering 259 to 279 has biased composition (basic residues); it reads LKTRNKKKASTKLIVRGRKAK.

The protein belongs to the universal ribosomal protein uL2 family. In terms of assembly, part of the 50S ribosomal subunit. Forms a bridge to the 30S subunit in the 70S ribosome.

Its function is as follows. One of the primary rRNA binding proteins. Required for association of the 30S and 50S subunits to form the 70S ribosome, for tRNA binding and peptide bond formation. It has been suggested to have peptidyltransferase activity; this is somewhat controversial. Makes several contacts with the 16S rRNA in the 70S ribosome. The polypeptide is Large ribosomal subunit protein uL2 (Chlorobaculum tepidum (strain ATCC 49652 / DSM 12025 / NBRC 103806 / TLS) (Chlorobium tepidum)).